Reading from the N-terminus, the 336-residue chain is Aromatic prenyltransferase (336 aa).

Belongs to the aromatic prenyltransferase family.

Prenyltransferase that attaches isoprenoid moieties to carbon atoms of aromatic substrates in an enzyme-catalyzed Friedel-Crafts reaction. Shows specificity for dimethylallyl diphosphate (DMAPP) and does not accept geranyl diphosphate (GPP) or isopentenyl diphosphate (IPP). Prenylates the artificial substrate 2,7-dihydroxynaphthalene (2,7-DHN), as well as dihydrophenazine-1-carboxylic acid at a lower level. Only traces of products are detected with aspulvinone E, flaviolin, or 4-hydroxybenzoic acid as substrates; and no product is formed with L-tryptophan, L-tyrosine, or 4-hydroxyphenylpyruvate. Ptf seems no to be involved in the prenylation reaction in the biosynthesis of aspulvinone H and J and the physiological function of ptf remains unknown. In Aspergillus terreus (strain NIH 2624 / FGSC A1156), this protein is Aromatic prenyltransferase.